The primary structure comprises 223 residues: Ethylene-inducing xylanase (223 aa).

Residues 1-19 (MVSFTTLLAGFVAVTGVLS) form the signal peptide. Residues 34-223 (QTIGPGTGFN…SSGNANINVS (190 aa)) enclose the GH11 domain. Asparagine 94 is a glycosylation site (N-linked (GlcNAc...) asparagine). The Nucleophile role is filled by glutamate 119. Glutamate 210 acts as the Proton donor in catalysis.

This sequence belongs to the glycosyl hydrolase 11 (cellulase G) family. As to quaternary structure, interactc with tomato LeEix2 receptor to trigger its internalization.

It localises to the secreted. The catalysed reaction is Endohydrolysis of (1-&gt;4)-beta-D-xylosidic linkages in xylans.. It functions in the pathway glycan degradation; xylan degradation. In terms of biological role, endo-1,4-beta-xylanase involved in the hydrolysis of xylan, a major structural heterogeneous polysaccharide found in plant biomass representing the second most abundant polysaccharide in the biosphere, after cellulose. Acts as an elicitor of plant defense responses in hosts such as tobacco (Nicotiana tabacum) or tomato (Solanum lycopersicum). Induces the production of ethylene and leads alterations in membrane function with rapid efflux of potassium, uptake of calcium, alkalization of the medium, increased leakage of cellular components and necrosis in plant hosts. EIX is translocated through the xylem of the host plant to the leaf mesophyll, leading to host response to pathogen-derived extracellular proteins in tissues distant from the invading pathogen. Greatly enhances the expression of two calcineurin B-like proteins-interacting protein kinases (CIPKs) family members, OsCIPK14 and OsCIPK15, in rice cultured cells. In tomato, triggers the defense response via binding to and subsequent internalization of the LeEix2 receptor. The sequence is that of Ethylene-inducing xylanase from Hypocrea rufa (Trichoderma viride).